The chain runs to 567 residues: Arginine--tRNA ligase (567 aa).

The 'HIGH' region motif lies at Ala121–His131.

The protein belongs to the class-I aminoacyl-tRNA synthetase family.

The protein resides in the cytoplasm. The catalysed reaction is tRNA(Arg) + L-arginine + ATP = L-arginyl-tRNA(Arg) + AMP + diphosphate. The protein is Arginine--tRNA ligase of Methanococcoides burtonii (strain DSM 6242 / NBRC 107633 / OCM 468 / ACE-M).